A 409-amino-acid polypeptide reads, in one-letter code: Isovaleryl-CoA dehydrogenase, mitochondrial (409 aa).

The transit peptide at 1–22 directs the protein to the mitochondrion; it reads MAAAQRWLPGILRRGDGLARRL. Residues 151–160 and 184–186 each bind FAD; these read LAMSEPNSGS and WCT. Serine 160 is a substrate binding site. Residues 206-207, tyrosine 261, and 268-271 contribute to the substrate site; these read SK and DLER. The active-site Proton acceptor is glutamate 270. FAD is bound by residues arginine 296, glutamine 307, and 364-368; that span reads QCLGG. 391–392 is a substrate binding site; that stretch reads AG. 393 to 395 contributes to the FAD binding site; sequence TSE.

Belongs to the acyl-CoA dehydrogenase family. Homodimer. Requires FAD as cofactor.

It localises to the mitochondrion. It catalyses the reaction 3-methylbutanoyl-CoA + oxidized [electron-transfer flavoprotein] + H(+) = 3-methylbut-2-enoyl-CoA + reduced [electron-transfer flavoprotein]. It functions in the pathway amino-acid degradation; L-leucine degradation; (S)-3-hydroxy-3-methylglutaryl-CoA from 3-isovaleryl-CoA: step 1/3. In Oryza sativa subsp. japonica (Rice), this protein is Isovaleryl-CoA dehydrogenase, mitochondrial.